The primary structure comprises 449 residues: Glucose-6-phosphate isomerase 1 (449 aa).

Phosphothreonine is present on Thr38. Glu290 functions as the Proton donor in the catalytic mechanism. Active-site residues include His311 and Lys425.

It belongs to the GPI family. In terms of assembly, homodimer.

It localises to the cytoplasm. It carries out the reaction alpha-D-glucose 6-phosphate = beta-D-fructose 6-phosphate. It participates in carbohydrate biosynthesis; gluconeogenesis. It functions in the pathway carbohydrate degradation; glycolysis; D-glyceraldehyde 3-phosphate and glycerone phosphate from D-glucose: step 2/4. In terms of biological role, catalyzes the reversible isomerization of glucose-6-phosphate to fructose-6-phosphate. This is Glucose-6-phosphate isomerase 1 from Geobacillus stearothermophilus (Bacillus stearothermophilus).